A 534-amino-acid chain; its full sequence is Tyrosine-protein kinase Fyn (534 aa).

Gly2 is lipidated: N-myristoyl glycine. 2 S-palmitoyl cysteine lipidation sites follow: Cys3 and Cys6. Thr12 carries the post-translational modification Phosphothreonine; by PKC. The segment at Thr15–Tyr39 is disordered. One can recognise an SH3 domain in the interval Thr82–Ser143. Residues Trp149–Ala246 enclose the SH2 domain. One can recognise a Protein kinase domain in the interval Leu268 to Phe521. ATP contacts are provided by residues Leu274 to Val282 and Lys296. The active-site Proton acceptor is Asp387. The residue at position 417 (Tyr417) is a Phosphotyrosine; by autocatalysis. Residue Tyr528 is modified to Phosphotyrosine.

It belongs to the protein kinase superfamily. Tyr protein kinase family. SRC subfamily. Associates through its SH3 domain, to the p85 subunit of phosphatidylinositol 3-kinase. Requires Mn(2+) as cofactor. Thymus and spleen.

Its subcellular location is the cytoplasm. The protein localises to the nucleus. It localises to the cell membrane. The protein resides in the perikaryon. The enzyme catalyses L-tyrosyl-[protein] + ATP = O-phospho-L-tyrosyl-[protein] + ADP + H(+). Inhibited by phosphorylation of Tyr-528 by leukocyte common antigen and activated by dephosphorylation of this site. In terms of biological role, tyrosine-protein kinase implicated in the control of cell growth. Plays a role in the regulation of intracellular calcium levels. Required in brain development and mature brain function with important roles in the regulation of axon growth, axon guidance, and neurite extension. Role in CNTN1-mediated signaling. In Gallus gallus (Chicken), this protein is Tyrosine-protein kinase Fyn (FYN).